The following is a 474-amino-acid chain: UDP-N-acetylmuramate--L-alanine ligase (474 aa).

An ATP-binding site is contributed by 119–125 (GTHGKTT).

Belongs to the MurCDEF family.

The protein resides in the cytoplasm. It carries out the reaction UDP-N-acetyl-alpha-D-muramate + L-alanine + ATP = UDP-N-acetyl-alpha-D-muramoyl-L-alanine + ADP + phosphate + H(+). The protein operates within cell wall biogenesis; peptidoglycan biosynthesis. In terms of biological role, cell wall formation. The chain is UDP-N-acetylmuramate--L-alanine ligase from Jannaschia sp. (strain CCS1).